The sequence spans 551 residues: HTH-type transcriptional regulator SgrR (551 aa).

An HTH marR-type domain is found at 1–116; that stretch reads MPSARLQQQF…LVSHLGRSFR (116 aa). Positions 26–49 form a DNA-binding region, H-T-H motif; it reads LNELAALLSCSRRHMRTLLNTMQD. A solute-binding region spans residues 163 to 492; the sequence is ELEADIAHHW…IDWQADAARW (330 aa).

Functionally, activates the small RNA gene sgrS under glucose-phosphate stress conditions as well as yfdZ. Represses its own transcription under both stress and non-stress conditions. Might act as a sensor of the intracellular accumulation of phosphoglucose by binding these molecules in its C-terminal solute-binding domain. This chain is HTH-type transcriptional regulator SgrR, found in Shigella boydii serotype 4 (strain Sb227).